Reading from the N-terminus, the 402-residue chain is Omega-3 fatty acid desaturase fat-1 (402 aa).

Transmembrane regions (helical) follow at residues 79–99 (LVQDFAALTILYFALPAFEYF), 101–121 (LFGYLVWNIFMGVFGFALFVV), 235–255 (CVISGICCCVCAYIALTIAGS), and 260–280 (FWYYWVPLSFFGLMLVIVTYL).

It belongs to the fatty acid desaturase type 1 family.

Its subcellular location is the membrane. It catalyses the reaction (9Z,12Z)-octadecadienoyl-CoA + 2 Fe(II)-[cytochrome b5] + O2 + 2 H(+) = (9Z,12Z,15Z)-octadecatrienoyl-CoA + 2 Fe(III)-[cytochrome b5] + 2 H2O. It carries out the reaction (8Z,11Z,14Z)-eicosatrienoyl-CoA + 2 Fe(II)-[cytochrome b5] + O2 + 2 H(+) = (8Z,11Z,14Z,17Z)-eicosatetraenoyl-CoA + 2 Fe(III)-[cytochrome b5] + 2 H2O. The catalysed reaction is (5Z,8Z,11Z,14Z)-eicosatetraenoyl-CoA + 2 Fe(II)-[cytochrome b5] + O2 + 2 H(+) = (5Z,8Z,11Z,14Z,17Z)-eicosapentaenoyl-CoA + 2 Fe(III)-[cytochrome b5] + 2 H2O. The enzyme catalyses (7Z,10Z,13Z,16Z)-docosatetraenoyl-CoA + 2 Fe(II)-[cytochrome b5] + O2 + 2 H(+) = (7Z,10Z,13Z,16Z,19Z)-docosapentaenoyl-CoA + 2 Fe(III)-[cytochrome b5] + 2 H2O. It catalyses the reaction (6Z,9Z,12Z)-octadecatrienoyl-CoA + 2 Fe(II)-[cytochrome b5] + O2 + 2 H(+) = (6Z,9Z,12Z,15Z)-octadecatetraenoyl-CoA + 2 Fe(III)-[cytochrome b5] + 2 H2O. It functions in the pathway lipid metabolism; polyunsaturated fatty acid biosynthesis. Functionally, omega-3 fatty acid desaturase that recognizes a range of 18- and 20-carbon omega-6 substrates. Introduces a double bond in the fatty acid chain three carbons away from terminal methyl group to biosynthesize n-3 (omega-3) polyunsaturated fatty acids (PUFAs) endogenously (PUFAs are essential for membrane structure and many cellular and physiological processes). Acts on a number of substrates like linoleoyl-CoA ((9Z,12Z)-octadecadienoyl-CoA, 18:2n-6), dihomo-gamma-linolenoyl-CoA ((8Z,11Z,14Z)-eicosatrienoyl-CoA, 20:3n-6), and arachidonoyl-CoA ((5Z,8Z,11Z,14Z)-eicosatetraenoyl-CoA, 20:4n-6), to generate alpha-linolenoyl-CoA ((9Z,12Z,15Z)-octadecatrienoyl-CoA, 18:3n-3), (8Z,11Z,14Z,17Z)-eicosatetraenoyl-CoA (20:4n-3) and (5Z,8Z,11Z,14Z,17Z)-eicosapentaenoyl-CoA (20:5n-3) respectively. Unlike plants, Caenorhabditis elegans desaturases seem to use fatty acyl-CoAs as substrates. This Caenorhabditis elegans protein is Omega-3 fatty acid desaturase fat-1 (fat-1).